A 462-amino-acid polypeptide reads, in one-letter code: Elongation factor 1-alpha 1 (462 aa).

Residue glycine 2 is modified to N,N,N-trimethylglycine. Residues 5-242 (KTHINIVVIG…DCILPPTRPT (238 aa)) form the tr-type G domain. Residues 14–21 (GHVDSGKS) are G1. 14–21 (GHVDSGKS) is a GTP binding site. The segment at 70 to 74 (GITID) is G2. Residues 91 to 94 (DAPG) form a G3 region. GTP contacts are provided by residues 153–156 (NKMD) and 194–196 (SGW). A G4 region spans residues 153-156 (NKMD). Residues 194 to 196 (SGW) are G5. Glutamate 301 and glutamate 374 each carry 5-glutamyl glycerylphosphorylethanolamine.

Belongs to the TRAFAC class translation factor GTPase superfamily. Classic translation factor GTPase family. EF-Tu/EF-1A subfamily.

The protein localises to the cytoplasm. It catalyses the reaction GTP + H2O = GDP + phosphate + H(+). Its function is as follows. Translation elongation factor that catalyzes the GTP-dependent binding of aminoacyl-tRNA (aa-tRNA) to the A-site of ribosomes during the elongation phase of protein synthesis. Base pairing between the mRNA codon and the aa-tRNA anticodon promotes GTP hydrolysis, releasing the aa-tRNA from EEF1A1 and allowing its accommodation into the ribosome. The growing protein chain is subsequently transferred from the P-site peptidyl tRNA to the A-site aa-tRNA, extending it by one amino acid through ribosome-catalyzed peptide bond formation. The polypeptide is Elongation factor 1-alpha 1 (EEF1A) (Gallus gallus (Chicken)).